A 356-amino-acid chain; its full sequence is Protein pelota homolog (356 aa).

Belongs to the eukaryotic release factor 1 family. Pelota subfamily. In terms of assembly, monomer. It depends on a divalent metal cation as a cofactor.

The protein resides in the cytoplasm. Its function is as follows. May function in recognizing stalled ribosomes, interact with stem-loop structures in stalled mRNA molecules, and effect endonucleolytic cleavage of the mRNA. May play a role in the release non-functional ribosomes and degradation of damaged mRNAs. Has endoribonuclease activity. The protein is Protein pelota homolog of Aeropyrum pernix (strain ATCC 700893 / DSM 11879 / JCM 9820 / NBRC 100138 / K1).